Here is a 276-residue protein sequence, read N- to C-terminus: NADPH-dependent 7-cyano-7-deazaguanine reductase (276 aa).

83–85 contacts substrate; sequence IES. 85-86 provides a ligand contact to NADPH; it reads SK. The active-site Thioimide intermediate is the C184. The active-site Proton donor is D191. 223–224 contributes to the substrate binding site; the sequence is HE. NADPH is bound at residue 252–253; it reads RG.

Belongs to the GTP cyclohydrolase I family. QueF type 2 subfamily. As to quaternary structure, homodimer.

It localises to the cytoplasm. The catalysed reaction is 7-aminomethyl-7-carbaguanine + 2 NADP(+) = 7-cyano-7-deazaguanine + 2 NADPH + 3 H(+). Its pathway is tRNA modification; tRNA-queuosine biosynthesis. Catalyzes the NADPH-dependent reduction of 7-cyano-7-deazaguanine (preQ0) to 7-aminomethyl-7-deazaguanine (preQ1). This Pseudomonas paraeruginosa (strain DSM 24068 / PA7) (Pseudomonas aeruginosa (strain PA7)) protein is NADPH-dependent 7-cyano-7-deazaguanine reductase.